We begin with the raw amino-acid sequence, 76 residues long: Omega-conotoxin-like TxO2 (76 aa).

The N-terminal stretch at 1–22 (MKLTCVVIVAVLFLTAWTFVTA) is a signal peptide. The propeptide occupies 23-52 (APHSSNALENLYLKAHHEMNNPEDSELNKR). Disulfide bonds link Cys53–Cys67, Cys60–Cys71, and Cys66–Cys75.

Belongs to the conotoxin O1 superfamily. Expressed by the venom duct.

It is found in the secreted. Its function is as follows. Omega-conotoxins act at presynaptic membranes, they bind and block voltage-gated calcium channels (Cav). This chain is Omega-conotoxin-like TxO2, found in Conus textile (Cloth-of-gold cone).